The sequence spans 514 residues: Xylose import ATP-binding protein XylG (514 aa).

ABC transporter domains follow at residues 7–246 and 263–508; these read FEMR…VGRE and LEAR…IHAE. Position 39–46 (39–46) interacts with ATP; sequence GENGAGKS.

The protein belongs to the ABC transporter superfamily. Xylose importer (TC 3.A.1.2.4) family. As to quaternary structure, the complex is composed of two ATP-binding proteins (XylG), two transmembrane proteins (XylH) and a solute-binding protein (XylF).

The protein resides in the cell inner membrane. It carries out the reaction D-xylose(out) + ATP + H2O = D-xylose(in) + ADP + phosphate + H(+). Part of the ABC transporter complex XylFGH involved in xylose import. Responsible for energy coupling to the transport system. The sequence is that of Xylose import ATP-binding protein XylG from Ralstonia nicotianae (strain ATCC BAA-1114 / GMI1000) (Ralstonia solanacearum).